A 478-amino-acid chain; its full sequence is Aspartate ammonia-lyase (478 aa).

5 residues coordinate L-aspartate: T104, S143, T144, N145, and T190. Residues 320–329 form an SS loop region; it reads GSSIMPAKVN. Residue S321 is the Proton acceptor of the active site. The L-aspartate site is built by S322 and K327.

This sequence belongs to the class-II fumarase/aspartase family. Aspartase subfamily. Homotetramer.

The enzyme catalyses L-aspartate = fumarate + NH4(+). Functionally, catalyzes the reversible conversion of L-aspartate to fumarate and ammonia. This Escherichia coli O157:H7 protein is Aspartate ammonia-lyase (aspA).